The following is a 105-amino-acid chain: Heat shock protein HspQ (105 aa).

The interval 84 to 105 (QPKLDELSASIKKQLKTPRLRN) is disordered. Residues 96–105 (KQLKTPRLRN) are compositionally biased toward basic residues.

This sequence belongs to the HspQ family.

Its subcellular location is the cytoplasm. Functionally, involved in the degradation of certain denaturated proteins, including DnaA, during heat shock stress. This chain is Heat shock protein HspQ, found in Wigglesworthia glossinidia brevipalpis.